The sequence spans 539 residues: uncharacterized protein (539 aa).

Disordered regions lie at residues 179–203 (SDELLPDTGEDSDEDGHNHGGHSHG) and 433–459 (AQASARAQARAARRGRSAAKARGHRDE). Acidic residues predominate over residues 182–192 (LLPDTGEDSDE). Low complexity predominate over residues 433–442 (AQASARAQAR). The span at 443 to 455 (AARRGRSAAKARG) shows a compositional bias: basic residues.

This sequence belongs to the mycobacterial PPE family.

The protein resides in the secreted. This is an uncharacterized protein from Mycobacterium tuberculosis (strain CDC 1551 / Oshkosh).